A 187-amino-acid polypeptide reads, in one-letter code: Threonylcarbamoyl-AMP synthase (187 aa).

A YrdC-like domain is found at 4–187 (TLDLDRAVAA…DARSGQILRD (184 aa)).

It belongs to the SUA5 family. TsaC subfamily.

It is found in the cytoplasm. It carries out the reaction L-threonine + hydrogencarbonate + ATP = L-threonylcarbamoyladenylate + diphosphate + H2O. Its function is as follows. Required for the formation of a threonylcarbamoyl group on adenosine at position 37 (t(6)A37) in tRNAs that read codons beginning with adenine. Catalyzes the conversion of L-threonine, HCO(3)(-)/CO(2) and ATP to give threonylcarbamoyl-AMP (TC-AMP) as the acyladenylate intermediate, with the release of diphosphate. The sequence is that of Threonylcarbamoyl-AMP synthase from Xanthomonas axonopodis pv. citri (strain 306).